The following is a 381-amino-acid chain: Acetyl-CoA:oxalate CoA-transferase (381 aa).

His233 is an active-site residue.

The protein belongs to the CoA-transferase III family. Homodimer.

It catalyses the reaction oxalate + acetyl-CoA = oxalyl-CoA + acetate. Involved in the catabolism of oxalate and in the adapatation to low pH. ACOCT serves to prime the oxalate-induced acid tolerance response (ATR) cycle by producing substrate for oxalyl-CoA decarboxylase (OXC) and formyl-coenzyme A transferase (FCOCT). Catalyzes the reversible conversion of acetyl-CoA and oxalate to oxalyl-CoA and acetate. It can also use formyl-CoA and oxalate to produce oxalyl-CoA and formate with significantly reduced specific activity. This chain is Acetyl-CoA:oxalate CoA-transferase (yfdE), found in Escherichia coli (strain K12).